The chain runs to 99 residues: Large ribosomal subunit protein uL23 (99 aa).

The protein belongs to the universal ribosomal protein uL23 family. As to quaternary structure, part of the 50S ribosomal subunit. Contacts protein L29, and trigger factor when it is bound to the ribosome.

One of the early assembly proteins it binds 23S rRNA. One of the proteins that surrounds the polypeptide exit tunnel on the outside of the ribosome. Forms the main docking site for trigger factor binding to the ribosome. The chain is Large ribosomal subunit protein uL23 from Hydrogenobaculum sp. (strain Y04AAS1).